The chain runs to 299 residues: Homeobox protein ceh-24 (299 aa).

The span at 1–35 (MSEKETPSPVLDVKKEKNEETGIDEEKSSEDDCSK) shows a compositional bias: basic and acidic residues. Disordered regions lie at residues 1–45 (MSEK…NPSK) and 208–263 (QEKE…SGVF). Positions 150–209 (RRKRRVLFSQAQVYELERRFKQAKYLTAPEREQLANSIRLTPTQVKIWFQNHRYKCKRQE) form a DNA-binding region, homeobox. Acidic residues predominate over residues 242–252 (DDKDDEEEEES).

It belongs to the NK-2 homeobox family. As to expression, expressed in the 8 vulval muscles, 8-10 ventral neurons in the head and in the most posterior pharyngeal muscle cell, m8. Expressed in SIA, SIB and SMB sublateral motor neurons, and in muscles of the pharynx and vulva.

It localises to the nucleus. In terms of biological role, probable transcriptional regulator that is required in neural development for the normal formation of sublateral cholinergic motor neuron processes. Plays a role in regulating the expression of acetylcholine transporter protein unc-17 in the sublateral processes. In particular, it is required in sublateral motor neurons for a left-right turning behavior that occurs during the lethargus phase of the normal sleep process called 'flipping'. During 'flipping' animals rotate 180 degrees about their longitudinal axis. The protein is Homeobox protein ceh-24 of Caenorhabditis elegans.